We begin with the raw amino-acid sequence, 369 residues long: Oleoyl-acyl carrier protein thioesterase, chloroplastic (369 aa).

Catalysis depends on residues Asn-262, His-264, and Cys-299.

This sequence belongs to the acyl-ACP thioesterase family.

The protein localises to the plastid. Its subcellular location is the chloroplast. It carries out the reaction (9Z)-octadecenoyl-[ACP] + H2O = (9Z)-octadecenoate + holo-[ACP] + H(+). Functionally, plays an essential role in chain termination during de novo fatty acid synthesis. High thioesterase activity for oleoyl-ACP versus other acyl-ACPs. The protein is Oleoyl-acyl carrier protein thioesterase, chloroplastic (FATA) of Coriandrum sativum (Coriander).